Here is a 97-residue protein sequence, read N- to C-terminus: Small ribosomal subunit protein bS6 (97 aa).

It belongs to the bacterial ribosomal protein bS6 family.

Its function is as follows. Binds together with bS18 to 16S ribosomal RNA. This Lactococcus lactis subsp. cremoris (strain MG1363) protein is Small ribosomal subunit protein bS6.